Here is a 616-residue protein sequence, read N- to C-terminus: uncharacterized protein (616 aa).

Belongs to the UbiD family.

This is an uncharacterized protein from Helicobacter pylori (strain J99 / ATCC 700824) (Campylobacter pylori J99).